The following is a 695-amino-acid chain: MADLSLYRNIGIFAHVDAGKTTTTERILKLTGKIHRLGEVHDGASTMDFMEQEAERGITIQSAATTCFWKGHRFNVIDTPGHVDFTVEVYRSLKVLDGGIGVFCGSGGVEPQSETNWRYANESEVSRLIFVNKLDRMGADFFRVVEQVKKVLGANPLVMTLPIGREDEFVGVVDVLTRQAYVWDDSGLPENFEVKEVPADMVDQVEEYREMMIETAVEQDDELMMAYMEGEEPTVEQIKACIRKGTRDLAFFPTFCGSAFKNKGMQLVLDAVVDYLPSPTEVEPQPLTDPATGEPTGEVATVSVDAPLKALAFKIMDDRFGALTFVRIYSGKIKKGDTILNSATGKTERIGRMVEMHANDRNEVESAQASDIIAIVGMKNVQTGHTLCDPKHECTLEPMIFPTPVISIAVKPKDKNGSEKMGIAIGKMVAEDPSFQVETDEDSGETILKGMGELHLDIKVDILKRTYGVELEVGAPQVAYRETITKAVEDSYTHKKQSGGSGQFGKIDYRIRPGEQNSGFTFKSTVVGGNVPKEFWPAVEKGFKSMMDTGTLAGFPVLDVEVELFDGGFHAVDSSAIAFEIAAKGAFRQSIPKAAPQLLEPIMKVDVFTPEDHVGDVIGDLNRRRGMIKDQEMGLTGVRVKADVPLSEMFGYIGSLRTMTSGRGQFSMEFSHYAPCPNNVAEQVIAEVKERNAKK.

A tr-type G domain is found at 5–280 (SLYRNIGIFA…AVVDYLPSPT (276 aa)). Residues 14 to 21 (AHVDAGKT), 78 to 82 (DTPGH), and 132 to 135 (NKLD) contribute to the GTP site.

Belongs to the TRAFAC class translation factor GTPase superfamily. Classic translation factor GTPase family. EF-G/EF-2 subfamily.

It is found in the cytoplasm. In terms of biological role, catalyzes the GTP-dependent ribosomal translocation step during translation elongation. During this step, the ribosome changes from the pre-translocational (PRE) to the post-translocational (POST) state as the newly formed A-site-bound peptidyl-tRNA and P-site-bound deacylated tRNA move to the P and E sites, respectively. Catalyzes the coordinated movement of the two tRNA molecules, the mRNA and conformational changes in the ribosome. This Vibrio cholerae serotype O1 (strain ATCC 39315 / El Tor Inaba N16961) protein is Elongation factor G 2.